A 368-amino-acid polypeptide reads, in one-letter code: tRNA(Met) cytidine acetate ligase (368 aa).

ATP is bound by residues isoleucine 7 to leucine 20, glycine 96, asparagine 152, and arginine 175.

It belongs to the TmcAL family.

Its subcellular location is the cytoplasm. It carries out the reaction cytidine(34) in elongator tRNA(Met) + acetate + ATP = N(4)-acetylcytidine(34) in elongator tRNA(Met) + AMP + diphosphate. Its function is as follows. Catalyzes the formation of N(4)-acetylcytidine (ac(4)C) at the wobble position of elongator tRNA(Met), using acetate and ATP as substrates. First activates an acetate ion to form acetyladenylate (Ac-AMP) and then transfers the acetyl group to tRNA to form ac(4)C34. The protein is tRNA(Met) cytidine acetate ligase of Streptococcus pyogenes serotype M4 (strain MGAS10750).